Here is a 243-residue protein sequence, read N- to C-terminus: Pyridoxine 5'-phosphate synthase (243 aa).

Asn9 provides a ligand contact to 3-amino-2-oxopropyl phosphate. A 1-deoxy-D-xylulose 5-phosphate-binding site is contributed by 11–12; sequence DH. A 3-amino-2-oxopropyl phosphate-binding site is contributed by Arg20. Residue His45 is the Proton acceptor of the active site. Positions 47 and 52 each coordinate 1-deoxy-D-xylulose 5-phosphate. Glu72 functions as the Proton acceptor in the catalytic mechanism. Thr102 serves as a coordination point for 1-deoxy-D-xylulose 5-phosphate. His193 serves as the catalytic Proton donor. Residues Gly194 and 215–216 contribute to the 3-amino-2-oxopropyl phosphate site; that span reads GH.

It belongs to the PNP synthase family. In terms of assembly, homooctamer; tetramer of dimers.

The protein resides in the cytoplasm. It carries out the reaction 3-amino-2-oxopropyl phosphate + 1-deoxy-D-xylulose 5-phosphate = pyridoxine 5'-phosphate + phosphate + 2 H2O + H(+). It participates in cofactor biosynthesis; pyridoxine 5'-phosphate biosynthesis; pyridoxine 5'-phosphate from D-erythrose 4-phosphate: step 5/5. Catalyzes the complicated ring closure reaction between the two acyclic compounds 1-deoxy-D-xylulose-5-phosphate (DXP) and 3-amino-2-oxopropyl phosphate (1-amino-acetone-3-phosphate or AAP) to form pyridoxine 5'-phosphate (PNP) and inorganic phosphate. The protein is Pyridoxine 5'-phosphate synthase of Vibrio vulnificus (strain CMCP6).